The chain runs to 166 residues: UPF0304 protein VV1_2093 (166 aa).

It belongs to the UPF0304 family.

The chain is UPF0304 protein VV1_2093 from Vibrio vulnificus (strain CMCP6).